The following is a 436-amino-acid chain: Adenylosuccinate synthetase (436 aa).

Residues 12–18 (GDEGKGK) and 40–42 (GHT) contribute to the GTP site. Residue aspartate 13 is the Proton acceptor of the active site. 2 residues coordinate Mg(2+): aspartate 13 and glycine 40. Residues 13-16 (DEGK), 38-41 (NAGH), threonine 128, arginine 142, glutamine 223, threonine 238, and arginine 302 contribute to the IMP site. Histidine 41 (proton donor) is an active-site residue. 298–304 (TTTGRRR) is a binding site for substrate. GTP contacts are provided by residues arginine 304, 330–332 (KLD), and 412–414 (SLG).

It belongs to the adenylosuccinate synthetase family. Homodimer. Mg(2+) serves as cofactor.

It localises to the cytoplasm. The enzyme catalyses IMP + L-aspartate + GTP = N(6)-(1,2-dicarboxyethyl)-AMP + GDP + phosphate + 2 H(+). The protein operates within purine metabolism; AMP biosynthesis via de novo pathway; AMP from IMP: step 1/2. Functionally, plays an important role in the de novo pathway of purine nucleotide biosynthesis. Catalyzes the first committed step in the biosynthesis of AMP from IMP. The protein is Adenylosuccinate synthetase of Prochlorococcus marinus (strain AS9601).